Reading from the N-terminus, the 254-residue chain is Imidazole glycerol phosphate synthase subunit HisF (254 aa).

Catalysis depends on residues Asp12 and Asp131.

This sequence belongs to the HisA/HisF family. Heterodimer of HisH and HisF.

The protein resides in the cytoplasm. It carries out the reaction 5-[(5-phospho-1-deoxy-D-ribulos-1-ylimino)methylamino]-1-(5-phospho-beta-D-ribosyl)imidazole-4-carboxamide + L-glutamine = D-erythro-1-(imidazol-4-yl)glycerol 3-phosphate + 5-amino-1-(5-phospho-beta-D-ribosyl)imidazole-4-carboxamide + L-glutamate + H(+). It participates in amino-acid biosynthesis; L-histidine biosynthesis; L-histidine from 5-phospho-alpha-D-ribose 1-diphosphate: step 5/9. Its function is as follows. IGPS catalyzes the conversion of PRFAR and glutamine to IGP, AICAR and glutamate. The HisF subunit catalyzes the cyclization activity that produces IGP and AICAR from PRFAR using the ammonia provided by the HisH subunit. This is Imidazole glycerol phosphate synthase subunit HisF from Kocuria rhizophila (strain ATCC 9341 / DSM 348 / NBRC 103217 / DC2201).